A 318-amino-acid polypeptide reads, in one-letter code: Olfactory receptor 56A1 (318 aa).

The Extracellular portion of the chain corresponds to 1–32 (MIQPMASPSNSSTVPVSEFLLICFPNFQSWQH). Residue Asn10 is glycosylated (N-linked (GlcNAc...) asparagine). Residues 33–53 (WLSLPLSLLFLLAMGANTTLL) form a helical membrane-spanning segment. Topologically, residues 54-61 (ITIQLEAS) are cytoplasmic. A helical transmembrane segment spans residues 62–82 (LHQPLYYLLSLLSLLDIVLCL). Over 83-106 (TVIPKVLAIFWYDLRSISFPACFL) the chain is Extracellular. Cys104 and Cys196 form a disulfide bridge. A helical transmembrane segment spans residues 107 to 127 (QMFIMNSFLPMESCTFMVMAY). The Cytoplasmic portion of the chain corresponds to 128 to 146 (DRYVAICHPLRYPSIITNQ). Residues 147 to 167 (FVAKASVFIVVRNALLTAPIP) form a helical membrane-spanning segment. The Extracellular portion of the chain corresponds to 168 to 203 (ILTSLLHYCGENVIENCICANLSVSRLSCDNFTLNR). N-linked (GlcNAc...) asparagine glycosylation is found at Asn188 and Asn198. Residues 204–224 (IYQFVAGWTLLGSDLFLIFLS) form a helical membrane-spanning segment. Topologically, residues 225–244 (YTFILRAVLRFKAEGAAVKA) are cytoplasmic. A helical membrane pass occupies residues 245–265 (LSTCGSHFILILFFSTILLVV). At 266 to 280 (VLTNVARKKVPMDIL) the chain is on the extracellular side. Residues 281 to 301 (ILLNVLHHLIPPALNPIVYGV) traverse the membrane as a helical segment. Residues 302–318 (RTKEIKQGIQKLLQRGR) are Cytoplasmic-facing.

It belongs to the G-protein coupled receptor 1 family.

It is found in the cell membrane. Its function is as follows. Odorant receptor. This is Olfactory receptor 56A1 (OR56A1) from Homo sapiens (Human).